A 314-amino-acid chain; its full sequence is uncharacterized protein (314 aa).

A run of 10 helical transmembrane segments spans residues Phe4–Gly23, Phe36–Ile53, Thr68–Phe90, Ala97–Val116, Val131–Ser153, Pro174–Trp196, Phe200–His222, Glu229–Ala251, Met261–Val283, and Ala290–Val309.

The protein belongs to the auxin efflux carrier (TC 2.A.69) family.

It localises to the cell membrane. This is an uncharacterized protein from Escherichia coli O157:H7.